Here is a 316-residue protein sequence, read N- to C-terminus: MTNVFADLNLHPSDNRGHLLTEKVNPKSECLDQLTTESLVTLFCEEDREPQRAVAAAIPELIQAVEAITDRLRSGGRLFYLGAGTSGRLGVLDAAECPPTFCSDPDLVQGVLAGGSAALLKSSEGLEDIEQLGKKDLEERDFSPADCLVGIAAGGTTPYVKGGLAYAKEINALAIAISCVPIEQAELPCSIDIRLLTGPELLTGSTRLKAGTATKMALNILSTCAMVRLGKVFGNRMVDVAATNIKLMDRALRILHDLADVDRVRGTELLQASDGSVKVALLMHTCGLDAETAQKLLIEHNNQLRTALARCKNCIA.

One can recognise an SIS domain in the interval 68–231 (ITDRLRSGGR…STCAMVRLGK (164 aa)). Glu-96 serves as the catalytic Proton donor. Residue Glu-127 is part of the active site.

This sequence belongs to the GCKR-like family. MurNAc-6-P etherase subfamily. As to quaternary structure, homodimer.

It carries out the reaction N-acetyl-D-muramate 6-phosphate + H2O = N-acetyl-D-glucosamine 6-phosphate + (R)-lactate. It functions in the pathway amino-sugar metabolism; N-acetylmuramate degradation. Specifically catalyzes the cleavage of the D-lactyl ether substituent of MurNAc 6-phosphate, producing GlcNAc 6-phosphate and D-lactate. The sequence is that of N-acetylmuramic acid 6-phosphate etherase from Prochlorococcus marinus (strain MIT 9313).